A 275-amino-acid polypeptide reads, in one-letter code: Formamidopyrimidine-DNA glycosylase (275 aa).

The Schiff-base intermediate with DNA role is filled by Pro-2. Catalysis depends on Glu-3, which acts as the Proton donor. Lys-58 (proton donor; for beta-elimination activity) is an active-site residue. Positions 95 and 114 each coordinate DNA. The FPG-type zinc-finger motif lies at 241-275 (TVYGRHNQPCPQCGGLVVKETLGQRGTFYCPNCQK). The active-site Proton donor; for delta-elimination activity is Arg-265.

It belongs to the FPG family. In terms of assembly, monomer. Requires Zn(2+) as cofactor.

The catalysed reaction is Hydrolysis of DNA containing ring-opened 7-methylguanine residues, releasing 2,6-diamino-4-hydroxy-5-(N-methyl)formamidopyrimidine.. The enzyme catalyses 2'-deoxyribonucleotide-(2'-deoxyribose 5'-phosphate)-2'-deoxyribonucleotide-DNA = a 3'-end 2'-deoxyribonucleotide-(2,3-dehydro-2,3-deoxyribose 5'-phosphate)-DNA + a 5'-end 5'-phospho-2'-deoxyribonucleoside-DNA + H(+). Involved in base excision repair of DNA damaged by oxidation or by mutagenic agents. Acts as a DNA glycosylase that recognizes and removes damaged bases. Has a preference for oxidized purines, such as 7,8-dihydro-8-oxoguanine (8-oxoG). Has AP (apurinic/apyrimidinic) lyase activity and introduces nicks in the DNA strand. Cleaves the DNA backbone by beta-delta elimination to generate a single-strand break at the site of the removed base with both 3'- and 5'-phosphates. The protein is Formamidopyrimidine-DNA glycosylase (mutM) of Neisseria meningitidis serogroup A / serotype 4A (strain DSM 15465 / Z2491).